Consider the following 158-residue polypeptide: NAD(P)H-quinone oxidoreductase subunit N (158 aa).

Belongs to the complex I NdhN subunit family. As to quaternary structure, NDH-1 can be composed of about 15 different subunits; different subcomplexes with different compositions have been identified which probably have different functions.

It is found in the cellular thylakoid membrane. The enzyme catalyses a plastoquinone + NADH + (n+1) H(+)(in) = a plastoquinol + NAD(+) + n H(+)(out). The catalysed reaction is a plastoquinone + NADPH + (n+1) H(+)(in) = a plastoquinol + NADP(+) + n H(+)(out). Its function is as follows. NDH-1 shuttles electrons from an unknown electron donor, via FMN and iron-sulfur (Fe-S) centers, to quinones in the respiratory and/or the photosynthetic chain. The immediate electron acceptor for the enzyme in this species is believed to be plastoquinone. Couples the redox reaction to proton translocation, and thus conserves the redox energy in a proton gradient. Cyanobacterial NDH-1 also plays a role in inorganic carbon-concentration. The protein is NAD(P)H-quinone oxidoreductase subunit N of Prochlorococcus marinus (strain AS9601).